The primary structure comprises 519 residues: Glucose-1-phosphate adenylyltransferase large subunit 3, chloroplastic/amyloplastic (519 aa).

The transit peptide at 1–74 directs the protein to the chloroplast; it reads MQFSSVFPLE…DAGPDTLHVR (74 aa).

This sequence belongs to the bacterial/plant glucose-1-phosphate adenylyltransferase family. Heterotetramer composed of two small and two large subunits. As to expression, expressed in stems.

It is found in the plastid. Its subcellular location is the chloroplast. The enzyme catalyses alpha-D-glucose 1-phosphate + ATP + H(+) = ADP-alpha-D-glucose + diphosphate. The protein operates within glycan biosynthesis; starch biosynthesis. Its activity is regulated as follows. Activated by 3'phosphoglycerate, inhibited by orthophosphate. Allosteric regulation. Involved in synthesis of starch. Catalyzes the synthesis of ADP-glucose, a molecule that serves as an activated glycosyl donor for alpha-1,4-glucan synthesis. Essential for starch synthesis in leaf chloroplasts. This Oryza sativa subsp. japonica (Rice) protein is Glucose-1-phosphate adenylyltransferase large subunit 3, chloroplastic/amyloplastic.